Here is a 67-residue protein sequence, read N- to C-terminus: Major cold shock protein (67 aa).

One can recognise a CSD domain in the interval 4 to 63 (GTVKWFNAEKGFGFISTENGQDVFAHFSAIQTNGFKTLEEGQKVAFDVEEGQRGPQAVNI).

In terms of assembly, homodimer.

It localises to the cytoplasm. In Streptococcus pyogenes serotype M3 (strain ATCC BAA-595 / MGAS315), this protein is Major cold shock protein (cspA).